A 527-amino-acid polypeptide reads, in one-letter code: MTHQAAEVAKRRTFAIISHPDAGKTTITEKLLLMGKAIAVAGTVKSRKSDRHATSDWMEMEKQRGISITTSVMQFPYRDHMVNLLDTPGHEDFSEDTYRTLTAVDSALMVLDGGKGVEPRTIALMDVCRLRDTPIVSFINKLDRDIRDPIELLDEIEAVLKIKAAPITWPIGCYRDFKGVYHLADDYIIVYTAGHGHERTDVKIIEKLDSDEARAHLGDEYDRFVDQLELVQGACHAFNQQEFLDGQLTPVFFGTALGNFGVDHVLDAVVDWAPRPLPRVANERTVEPVEEKFSGFVFKIQANMDPKHRDRIAFMRICSGKYDKGMKMRHVRTGKDVRIGDALTFFSSEREQLEEAFAGDIIGLHNHGTIQIGDTFTEGESLSFTGIPHFAPELFRRVRLRDPLKSKQLRQGLQQLAEEGATQVFFPERSNDIILGAVGVLQFDVVASRLKEEYKVECSYEPITVYSARWIDCSDKKKLEEFSNKAVENLAVDGGGHLTYLAPTRVNLALMEERWPDVKFRATREHH.

Residues 9-277 form the tr-type G domain; that stretch reads AKRRTFAIIS…AVVDWAPRPL (269 aa). Residues 18–25, 86–90, and 140–143 each bind GTP; these read SHPDAGKT, DTPGH, and NKLD.

The protein belongs to the TRAFAC class translation factor GTPase superfamily. Classic translation factor GTPase family. PrfC subfamily.

Its subcellular location is the cytoplasm. Functionally, increases the formation of ribosomal termination complexes and stimulates activities of RF-1 and RF-2. It binds guanine nucleotides and has strong preference for UGA stop codons. It may interact directly with the ribosome. The stimulation of RF-1 and RF-2 is significantly reduced by GTP and GDP, but not by GMP. This chain is Peptide chain release factor 3, found in Pseudomonas fluorescens (strain SBW25).